Consider the following 188-residue polypeptide: dCTP deaminase (188 aa).

Residues 111 to 116 (KSTYAR), 135 to 137 (TLE), Gln156, Tyr170, and Gln180 contribute to the dCTP site. Catalysis depends on Glu137, which acts as the Proton donor/acceptor.

Belongs to the dCTP deaminase family. In terms of assembly, homotrimer.

The enzyme catalyses dCTP + H2O + H(+) = dUTP + NH4(+). The protein operates within pyrimidine metabolism; dUMP biosynthesis; dUMP from dCTP (dUTP route): step 1/2. Catalyzes the deamination of dCTP to dUTP. This Pseudomonas savastanoi pv. phaseolicola (strain 1448A / Race 6) (Pseudomonas syringae pv. phaseolicola (strain 1448A / Race 6)) protein is dCTP deaminase.